The following is a 138-amino-acid chain: Protein NrdI (138 aa).

This sequence belongs to the NrdI family.

Probably involved in ribonucleotide reductase function. This is Protein NrdI from Beutenbergia cavernae (strain ATCC BAA-8 / DSM 12333 / CCUG 43141 / JCM 11478 / NBRC 16432 / NCIMB 13614 / HKI 0122).